Here is a 143-residue protein sequence, read N- to C-terminus: Transmembrane protein 80 (143 aa).

The next 4 membrane-spanning stretches (helical) occupy residues 21-41 (MLFYLSGTYYALYFLATLLMI), 55-75 (LVLDLALLFLMGILEAVRLYL), 99-119 (ALLSAHFLLWQALVLWADWAL), and 121-141 (ATLLALHGLEAVLQVVAIAAF).

It is found in the membrane. Its subcellular location is the cell projection. The protein localises to the cilium. The polypeptide is Transmembrane protein 80 (Homo sapiens (Human)).